Reading from the N-terminus, the 66-residue chain is UPF0391 membrane protein AM1_5042 (66 aa).

Helical transmembrane passes span 4-24 and 28-47; these read LTLTFLVVALIAAFLGFSGIA and AAIAKILFCIFIVCFILVWP.

This sequence belongs to the UPF0391 family.

It is found in the cell membrane. The sequence is that of UPF0391 membrane protein AM1_5042 from Acaryochloris marina (strain MBIC 11017).